A 141-amino-acid chain; its full sequence is Cystatin (141 aa).

A signal peptide spans 1 to 26 (MVHSQLPVVALLRLLCALLLLPSATM). The Cystatin domain occupies 29-129 (GGLSPRSVTD…CRFQVWSRPW (101 aa)). The short motif at 73 to 77 (QVVAG) is the Secondary area of contact element. 2 cysteine pairs are disulfide-bonded: Cys-91–Cys-107 and Cys-120–Cys-140.

The protein belongs to the cystatin family. As to expression, expressed at a low level by the venom gland (at protein level).

Its subcellular location is the secreted. In terms of biological role, inhibits various C1 cysteine proteases including cathepsin L, papain and cathepsin B. This protein has no toxic activity and its function in the venom is unknown. It may play a role as a housekeeping or regulatory protein. In Notechis scutatus scutatus (Mainland tiger snake), this protein is Cystatin.